Here is a 228-residue protein sequence, read N- to C-terminus: Protein GlxC (228 aa).

The protein belongs to the FwdC/FmdC family.

In Rhizobium meliloti (strain 1021) (Ensifer meliloti), this protein is Protein GlxC (glxC).